The primary structure comprises 396 residues: 1-deoxy-D-xylulose 5-phosphate reductoisomerase (396 aa).

NADPH contacts are provided by Thr10, Gly11, Ser12, Ile13, and Asn123. Lys124 provides a ligand contact to 1-deoxy-D-xylulose 5-phosphate. An NADPH-binding site is contributed by Glu125. Asp149 contributes to the Mn(2+) binding site. The 1-deoxy-D-xylulose 5-phosphate site is built by Ser150, Glu151, Ser185, and His208. Glu151 lines the Mn(2+) pocket. Gly214 lines the NADPH pocket. Residues Ser221, Asn226, Lys227, and Glu230 each coordinate 1-deoxy-D-xylulose 5-phosphate. Residue Glu230 coordinates Mn(2+).

The protein belongs to the DXR family. It depends on Mg(2+) as a cofactor. Requires Mn(2+) as cofactor.

It carries out the reaction 2-C-methyl-D-erythritol 4-phosphate + NADP(+) = 1-deoxy-D-xylulose 5-phosphate + NADPH + H(+). It participates in isoprenoid biosynthesis; isopentenyl diphosphate biosynthesis via DXP pathway; isopentenyl diphosphate from 1-deoxy-D-xylulose 5-phosphate: step 1/6. In terms of biological role, catalyzes the NADPH-dependent rearrangement and reduction of 1-deoxy-D-xylulose-5-phosphate (DXP) to 2-C-methyl-D-erythritol 4-phosphate (MEP). This Shewanella sp. (strain ANA-3) protein is 1-deoxy-D-xylulose 5-phosphate reductoisomerase.